A 65-amino-acid polypeptide reads, in one-letter code: Large ribosomal subunit protein bL33 (65 aa).

The disordered stretch occupies residues 17 to 40 (SRSVPSSEKRSAGVSRYTTEKNRR).

Belongs to the bacterial ribosomal protein bL33 family.

The sequence is that of Large ribosomal subunit protein bL33 from Prochlorococcus marinus (strain NATL1A).